The following is an 838-amino-acid chain: Polyribonucleotide nucleotidyltransferase (838 aa).

2 residues coordinate Mg(2+): aspartate 494 and aspartate 500. In terms of domain architecture, KH spans proline 561 to isoleucine 620. The 68-residue stretch at glycine 630 to arginine 697 folds into the S1 motif domain. Over residues glycine 747–glycine 757 the composition is skewed to gly residues. Residues glycine 747–phenylalanine 838 form a disordered region. Low complexity predominate over residues alanine 788–serine 810. Residues glycine 811–glycine 820 show a composition bias toward gly residues.

It belongs to the polyribonucleotide nucleotidyltransferase family. Requires Mg(2+) as cofactor.

The protein localises to the cytoplasm. The enzyme catalyses RNA(n+1) + phosphate = RNA(n) + a ribonucleoside 5'-diphosphate. Its function is as follows. Involved in mRNA degradation. Catalyzes the phosphorolysis of single-stranded polyribonucleotides processively in the 3'- to 5'-direction. This Anaplasma phagocytophilum (strain HZ) protein is Polyribonucleotide nucleotidyltransferase.